Here is a 163-residue protein sequence, read N- to C-terminus: 2-amino-4-hydroxy-6-hydroxymethyldihydropteridine pyrophosphokinase (163 aa).

The protein belongs to the HPPK family.

The enzyme catalyses 6-hydroxymethyl-7,8-dihydropterin + ATP = (7,8-dihydropterin-6-yl)methyl diphosphate + AMP + H(+). Its pathway is cofactor biosynthesis; tetrahydrofolate biosynthesis; 2-amino-4-hydroxy-6-hydroxymethyl-7,8-dihydropteridine diphosphate from 7,8-dihydroneopterin triphosphate: step 4/4. In terms of biological role, catalyzes the transfer of pyrophosphate from adenosine triphosphate (ATP) to 6-hydroxymethyl-7,8-dihydropterin, an enzymatic step in folate biosynthesis pathway. This is 2-amino-4-hydroxy-6-hydroxymethyldihydropteridine pyrophosphokinase (folK) from Helicobacter pylori (strain ATCC 700392 / 26695) (Campylobacter pylori).